Here is an 880-residue protein sequence, read N- to C-terminus: DNA mismatch repair protein MutS (880 aa).

624–631 (GPNMAGKS) provides a ligand contact to ATP.

Belongs to the DNA mismatch repair MutS family.

Its function is as follows. This protein is involved in the repair of mismatches in DNA. It is possible that it carries out the mismatch recognition step. This protein has a weak ATPase activity. This Alkaliphilus metalliredigens (strain QYMF) protein is DNA mismatch repair protein MutS.